Consider the following 293-residue polypeptide: tRNA pseudouridine synthase B (293 aa).

The Nucleophile role is filled by D38.

This sequence belongs to the pseudouridine synthase TruB family. Type 1 subfamily.

The enzyme catalyses uridine(55) in tRNA = pseudouridine(55) in tRNA. Responsible for synthesis of pseudouridine from uracil-55 in the psi GC loop of transfer RNAs. This chain is tRNA pseudouridine synthase B, found in Trichormus variabilis (strain ATCC 29413 / PCC 7937) (Anabaena variabilis).